A 321-amino-acid chain; its full sequence is Eukaryotic translation initiation factor 3 subunit I (321 aa).

5 WD repeats span residues 8–47 (GHER…RLGT), 50–89 (GHGG…TLSK), 140–179 (VDNS…KLIS), 182–221 (EHSK…HLKT), and 279–318 (GHFG…DDIE).

It belongs to the eIF-3 subunit I family. As to quaternary structure, component of the eukaryotic translation initiation factor 3 (eIF-3) complex.

It is found in the cytoplasm. In terms of biological role, component of the eukaryotic translation initiation factor 3 (eIF-3) complex, which is involved in protein synthesis of a specialized repertoire of mRNAs and, together with other initiation factors, stimulates binding of mRNA and methionyl-tRNAi to the 40S ribosome. The eIF-3 complex specifically targets and initiates translation of a subset of mRNAs involved in cell proliferation. The protein is Eukaryotic translation initiation factor 3 subunit I of Nematostella vectensis (Starlet sea anemone).